A 672-amino-acid polypeptide reads, in one-letter code: Transcriptional activator of sulfur metabolism MET4 (672 aa).

Residues 1 to 10 (MKQEQSHEGD) show a composition bias toward basic and acidic residues. Positions 1 to 44 (MKQEQSHEGDSYSTEFINLFGKDTATHPSSNNGANNNGMGSTNS) are disordered. Low complexity predominate over residues 29–44 (SSNNGANNNGMGSTNS). 3 short sequence motifs (9aaTAD) span residues 89–97 (ILLEQLAYV), 102–110 (PSLDNEFSN), and 109–117 (SNVDWNVNT). The tract at residues 95 to 144 (AYVDNFIPSLDNEFSNVDWNVNTTHNNANNNGADTFSSINANPFDLDEQL) is transcriptional activation. Disordered regions lie at residues 157 to 265 (IFPD…NMTS) and 299 to 347 (TTHT…NITV). Residues 165–174 (SNNNNNSNNG) show a composition bias toward low complexity. Positions 175–188 (NDDHSNHDVLHEDP) are enriched in basic and acidic residues. The segment at 188-235 (PSTNNRQRNPHFLTQRRNTFLTSQYDQSKSRFSSKNKRNGNNGETNNF) is inhibitory region; AdoMet responsiveness; required for interaction with MET30. Over residues 202–214 (QRRNTFLTSQYDQ) the composition is skewed to polar residues. Low complexity predominate over residues 226-238 (NGNNGETNNFGDN). Composition is skewed to polar residues over residues 251 to 265 (GSPS…NMTS) and 301 to 321 (HTPN…SSSQ). The auxiliary; required for high transcriptional activity under nonrepressive growth conditions stretch occupies residues 312–375 (VTSAQNSSSQ…NVPNGAYNSL (64 aa)). The segment at 375–403 (LISAGFDNDQIDAIAAIMAYHHQKKIREN) is required for interaction with MET31 and MET32. Serine 416 is subject to Phosphoserine. Positions 475–574 (PKSNNIHNQR…DNEDDEYDDA (100 aa)) are disordered. The segment covering 477-486 (SNNIHNQRQP) has biased composition (polar residues). The span at 487–498 (SRNDHKISRESD) shows a compositional bias: basic and acidic residues. Low complexity predominate over residues 499-512 (GNNGNDNVHHNNAV). Composition is skewed to basic and acidic residues over residues 519 to 528 (RGDEIAKIRS) and 537 to 565 (SDHK…KYSD). At serine 564 the chain carries Phosphoserine. A bZIP domain is found at 586-649 (KKELGDDDED…KLLKNLVLSS (64 aa)). A basic motif region spans residues 601–612 (KKSHQKKKLKEK). The stretch at 609–648 (LKEKELESSIHELTEIAASLQKRIHTLETENKLLKNLVLS) forms a coiled coil. Residues 614 to 642 (LESSIHELTEIAASLQKRIHTLETENKLL) are leucine-zipper.

It belongs to the bZIP family. In terms of assembly, interacts with MET30. Tethered to DNA through two alternate complexes associating MET4 with MET28 and either MET31 or MET32. Interacts with MET28 and CBF1 through its leucine zipper to form a heteromeric complex.

It localises to the nucleus. In terms of biological role, positive trans-acting factor capable of stimulating the transcription of the MET genes from the methionine biosynthetic pathway. MET4, MET28 and CBF1 are required for full induction of MET25 and MET16 gene transcription. MET4 controls as well the derepression of MET6. Required for the transcription of genes necessary for sulfur amino acid biosynthesis. Involved in the transcription activation of MET28 and MET30. Required for MET3 gene expression via assembly of the MET4-MET28-MET31 and MET4-MET28-MET32 complexes. Involved in response to cadmium and arsenic. Cadmium-activated MET4 also induces glutathione biosynthesis. The sequence is that of Transcriptional activator of sulfur metabolism MET4 (MET4) from Saccharomyces cerevisiae (strain ATCC 204508 / S288c) (Baker's yeast).